The sequence spans 188 residues: ATP synthase subunit b 2 (188 aa).

Residues 1–23 are disordered; it reads MAEGHGDANGATAHTAADGGHKA. Residues 8–18 are compositionally biased toward low complexity; the sequence is ANGATAHTAAD. The helical transmembrane segment at 37–57 threads the bilayer; it reads LVSLLIAFVALYLIVSKIALP.

It belongs to the ATPase B chain family. In terms of assembly, F-type ATPases have 2 components, F(1) - the catalytic core - and F(0) - the membrane proton channel. F(1) has five subunits: alpha(3), beta(3), gamma(1), delta(1), epsilon(1). F(0) has three main subunits: a(1), b(2) and c(10-14). The alpha and beta chains form an alternating ring which encloses part of the gamma chain. F(1) is attached to F(0) by a central stalk formed by the gamma and epsilon chains, while a peripheral stalk is formed by the delta and b chains.

The protein localises to the cell inner membrane. F(1)F(0) ATP synthase produces ATP from ADP in the presence of a proton or sodium gradient. F-type ATPases consist of two structural domains, F(1) containing the extramembraneous catalytic core and F(0) containing the membrane proton channel, linked together by a central stalk and a peripheral stalk. During catalysis, ATP synthesis in the catalytic domain of F(1) is coupled via a rotary mechanism of the central stalk subunits to proton translocation. Its function is as follows. Component of the F(0) channel, it forms part of the peripheral stalk, linking F(1) to F(0). The b'-subunit is a diverged and duplicated form of b found in plants and photosynthetic bacteria. The polypeptide is ATP synthase subunit b 2 (atpF2) (Rhodopseudomonas palustris (strain BisB18)).